We begin with the raw amino-acid sequence, 348 residues long: Phosphoribosylformylglycinamidine cyclo-ligase (348 aa).

This sequence belongs to the AIR synthase family.

It localises to the cytoplasm. The catalysed reaction is 2-formamido-N(1)-(5-O-phospho-beta-D-ribosyl)acetamidine + ATP = 5-amino-1-(5-phospho-beta-D-ribosyl)imidazole + ADP + phosphate + H(+). Its pathway is purine metabolism; IMP biosynthesis via de novo pathway; 5-amino-1-(5-phospho-D-ribosyl)imidazole from N(2)-formyl-N(1)-(5-phospho-D-ribosyl)glycinamide: step 2/2. In Ruegeria sp. (strain TM1040) (Silicibacter sp.), this protein is Phosphoribosylformylglycinamidine cyclo-ligase.